Here is a 180-residue protein sequence, read N- to C-terminus: uncharacterized protein (180 aa).

In terms of domain architecture, Macro spans 1–180; that stretch reads MVEFEIVKGD…KDYERALRAV (180 aa).

This is an uncharacterized protein from Thermococcus kodakarensis (strain ATCC BAA-918 / JCM 12380 / KOD1) (Pyrococcus kodakaraensis (strain KOD1)).